Here is a 124-residue protein sequence, read N- to C-terminus: Small ribosomal subunit protein uS12 (124 aa).

At Asp-89 the chain carries 3-methylthioaspartic acid. Residues 102–124 (LDTSGVNNRKHGRSKYGTKRPKS) form a disordered region. The segment covering 109-124 (NRKHGRSKYGTKRPKS) has biased composition (basic residues).

This sequence belongs to the universal ribosomal protein uS12 family. Part of the 30S ribosomal subunit. Contacts proteins S8 and S17. May interact with IF1 in the 30S initiation complex.

With S4 and S5 plays an important role in translational accuracy. In terms of biological role, interacts with and stabilizes bases of the 16S rRNA that are involved in tRNA selection in the A site and with the mRNA backbone. Located at the interface of the 30S and 50S subunits, it traverses the body of the 30S subunit contacting proteins on the other side and probably holding the rRNA structure together. The combined cluster of proteins S8, S12 and S17 appears to hold together the shoulder and platform of the 30S subunit. This chain is Small ribosomal subunit protein uS12, found in Francisella tularensis subsp. novicida (strain U112).